A 366-amino-acid chain; its full sequence is Phenylalanine dehydrogenase (366 aa).

An NAD(+)-binding site is contributed by Arg-45. Lys-69 is an L-phenylalanine binding site. The active site involves Lys-81. NAD(+)-binding positions include Asp-116, Thr-151, 181 to 187, 204 to 205, 241 to 242, and 262 to 264; these read GVGKVGE, DI, AK, and SAN. Asn-264 provides a ligand contact to L-phenylalanine.

It belongs to the Glu/Leu/Phe/Val dehydrogenases family.

It carries out the reaction L-phenylalanine + NAD(+) + H2O = 3-phenylpyruvate + NH4(+) + NADH + H(+). The protein operates within amino-acid biosynthesis; L-phenylalanine biosynthesis; L-phenylalanine from phenylpyruvate (PDH route): step 1/1. Its function is as follows. Catalyzes the reversible NAD(+)-dependent oxidative deamination of L-phenylalanine to phenylpyruvate. In Thermoactinomyces intermedius, this protein is Phenylalanine dehydrogenase.